Reading from the N-terminus, the 306-residue chain is MRVVFMGTPEFSVPILTAIIGHGYEVVAAYTQPPRPAGRRGLELTRSPVHEKAEQFGIPVFTPKSLKGAEEQDVFASLEADVAIVVAYGLLLPKAILDAPRLGCYNGHASLLPRWRGAAPIQRAIMAGDAETGMMIMKMDEGLDTGPVAMAEKVAITPDMTAGELHDRLSVIGADLMIRALGALERESLALQPQAEEGVTYAAKIDKAEARIDWSKPAKDVHNSIRGLSPFPGAWCEMEINGAVERVKLQRSTLGEGSGAPGTVLDDRLMIACGEGAVRLATLQRSGGKPLPAQEFLRGQRVTKVL.

Residue 110-113 (SLLP) coordinates (6S)-5,6,7,8-tetrahydrofolate.

It belongs to the Fmt family.

The catalysed reaction is L-methionyl-tRNA(fMet) + (6R)-10-formyltetrahydrofolate = N-formyl-L-methionyl-tRNA(fMet) + (6S)-5,6,7,8-tetrahydrofolate + H(+). In terms of biological role, attaches a formyl group to the free amino group of methionyl-tRNA(fMet). The formyl group appears to play a dual role in the initiator identity of N-formylmethionyl-tRNA by promoting its recognition by IF2 and preventing the misappropriation of this tRNA by the elongation apparatus. The protein is Methionyl-tRNA formyltransferase of Brucella ovis (strain ATCC 25840 / 63/290 / NCTC 10512).